Consider the following 308-residue polypeptide: MKKQRRFQGQDIHGMLLLDKPVGISSNGALQRVKQIYQARKAGHTGSLDPLANGLLPICLGEATKLSGFLLEADKRYQVMCRLGVVTTTGDADGEVLETHPVNELDRDEVAKFLSGFSGPQEQVPPMYSAIKHQGQRLYKLARQGIEVERKSRQVTIHTIKLTELVNNELGFEVFCSKGTYIRTLAEDIGRALGCGAHVIALRRTQVGSFGASDMISLEELEMLAETNVEALGNLLLPVGQILADWPAVNLIADLAYYLRQGQSVRVPQAPSEGWVRLIECGKGFFGVGRITEDGRIAPRRLIFSQSG.

The active-site Nucleophile is Asp-49.

This sequence belongs to the pseudouridine synthase TruB family. Type 1 subfamily.

It catalyses the reaction uridine(55) in tRNA = pseudouridine(55) in tRNA. Responsible for synthesis of pseudouridine from uracil-55 in the psi GC loop of transfer RNAs. The sequence is that of tRNA pseudouridine synthase B from Nitrosococcus oceani (strain ATCC 19707 / BCRC 17464 / JCM 30415 / NCIMB 11848 / C-107).